We begin with the raw amino-acid sequence, 270 residues long: Indole-3-glycerol phosphate synthase (270 aa).

This sequence belongs to the TrpC family.

The catalysed reaction is 1-(2-carboxyphenylamino)-1-deoxy-D-ribulose 5-phosphate + H(+) = (1S,2R)-1-C-(indol-3-yl)glycerol 3-phosphate + CO2 + H2O. Its pathway is amino-acid biosynthesis; L-tryptophan biosynthesis; L-tryptophan from chorismate: step 4/5. This Beutenbergia cavernae (strain ATCC BAA-8 / DSM 12333 / CCUG 43141 / JCM 11478 / NBRC 16432 / NCIMB 13614 / HKI 0122) protein is Indole-3-glycerol phosphate synthase.